Consider the following 576-residue polypeptide: uncharacterized protein (576 aa).

The disordered stretch occupies residues 41–78 (EKESESKLNSKSTTLQSSDSEDWDSEENEDDITDVGVP). Over residues 49–58 (NSKSTTLQSS) the composition is skewed to low complexity. A compositionally biased stretch (acidic residues) spans 59–73 (DSEDWDSEENEDDIT). WD repeat units lie at residues 87-126 (GHSK…ATNP), 195-235 (GHIA…SQLE), 248-288 (LSRI…KRPV), 296-335 (LPQQ…KCVN), and 393-433 (TVTA…RGVK). The tract at residues 547–576 (SETQPTPIYQGVTEGDISSEEGNPSKKQKR) is disordered.

This is an uncharacterized protein from Schizosaccharomyces pombe (strain 972 / ATCC 24843) (Fission yeast).